The chain runs to 450 residues: Chromosomal replication initiator protein DnaA 2 (450 aa).

Residues M1–K87 are domain I, interacts with DnaA modulators. Positions K87 to L114 are domain II. The segment at K115–C330 is domain III, AAA+ region. Residues G159, G161, K162, and T163 each coordinate ATP. The interval R331 to G450 is domain IV, binds dsDNA.

The protein belongs to the DnaA family. As to quaternary structure, oligomerizes as a right-handed, spiral filament on DNA at oriC.

Its subcellular location is the cytoplasm. Functionally, plays an essential role in the initiation and regulation of chromosomal replication. ATP-DnaA binds to the origin of replication (oriC) to initiate formation of the DNA replication initiation complex once per cell cycle. Binds the DnaA box (a 9 base pair repeat at the origin) and separates the double-stranded (ds)DNA. Forms a right-handed helical filament on oriC DNA; dsDNA binds to the exterior of the filament while single-stranded (ss)DNA is stabiized in the filament's interior. The ATP-DnaA-oriC complex binds and stabilizes one strand of the AT-rich DNA unwinding element (DUE), permitting loading of DNA polymerase. After initiation quickly degrades to an ADP-DnaA complex that is not apt for DNA replication. Binds acidic phospholipids. The chain is Chromosomal replication initiator protein DnaA 2 from Chlamydia pneumoniae (Chlamydophila pneumoniae).